Reading from the N-terminus, the 320-residue chain is Rhomboid-like protein 17, chloroplastic (320 aa).

Residues 1–87 (MHAIFSSFSR…LKFGNVMESR (87 aa)) constitute a chloroplast transit peptide. 5 helical membrane passes run 116-136 (WINGANGVVFGLVIANAAVFT), 160-180 (LITSGFSHIGTSQIILNMIGI), 199-219 (LYFAGALGGSVCFLSYHALLA), 247-267 (MFAIALLDMFIYPKVTTYFAL), and 295-315 (IASSSGQLGGVVVAAMAWARI).

It belongs to the peptidase S54 family.

The protein localises to the plastid. Its subcellular location is the chloroplast membrane. Functionally, probable rhomboid-type serine protease that catalyzes intramembrane proteolysis. The chain is Rhomboid-like protein 17, chloroplastic from Arabidopsis thaliana (Mouse-ear cress).